The following is a 239-amino-acid chain: tRNA (guanine-N(1)-)-methyltransferase (239 aa).

S-adenosyl-L-methionine-binding positions include Gly-108 and 127–132 (IGDYVL).

It belongs to the RNA methyltransferase TrmD family. In terms of assembly, homodimer.

It localises to the cytoplasm. It carries out the reaction guanosine(37) in tRNA + S-adenosyl-L-methionine = N(1)-methylguanosine(37) in tRNA + S-adenosyl-L-homocysteine + H(+). Functionally, specifically methylates guanosine-37 in various tRNAs. The sequence is that of tRNA (guanine-N(1)-)-methyltransferase from Lactobacillus helveticus (strain DPC 4571).